We begin with the raw amino-acid sequence, 431 residues long: uncharacterized protein (431 aa).

The next 2 helical transmembrane spans lie at 42–62 (LLIG…IGCL) and 74–94 (VMIF…ATML). An N-linked (GlcNAc...) asparagine; by host glycan is attached at Asn-105. The next 5 membrane-spanning stretches (helical) occupy residues 111–131 (LVLF…LFLI), 153–173 (AGVA…AAVP), 202–222 (MWFL…ELAY), 236–256 (VCTF…FRVL), and 279–299 (ATRT…IAFF).

It is found in the membrane. This is an uncharacterized protein from Homo sapiens (Human).